Reading from the N-terminus, the 804-residue chain is MAHSMSRPVAATAAALLALALPQALAQANTSYVDYNIEANPDLYPLCIETIPLSFPDCQNGPLRSHLICDETATPYDRAASLISLFTLDELIANTGNTGLGVSRLGLPAYQVWSEALHGLDRANFSDSGAYNWATSFPQPILTTAALNRTLIHQIASIISTQGRAFNNAGRYGLDVYAPNINTFRHPVWGRGQETPGEDVSLAAVYAYEYITGIQGPDPESNLKLAATAKHYAGYDIENWHNHSRLGNDMNITQQDLSEYYTPQFHVAARDAKVQSVMCAYNAVNGVPACADSYFLQTLLRDTFGFVDHGYVSSDCDAAYNIYNPHGYASSQAAAAAEAILAGTDIDCGTTYQWHLNESITAGDLSRDDIEQGVIRLYTTLVQAGYFDSNTTKANNPYRDLSWSDVLETDAWNISYQAATQGIVLLKNSNNVLPLTEKAYPPSNTTVALIGPWANATTQLLGNYYGNAPYMISPRAAFEEAGYKVNFAEGTGISSTSTSGFAAALSAAQSADVIIYAGGIDNTLEAEALDRESIAWPGNQLDLIQKLASAAGKKPLIVLQMGGGQVDSSSLKNNTKVSALLWGGYPGQSGGFALRDIITGKKNPAGRLVTTQYPASYAEEFPATDMNLRPEGDNPGQTYKWYTGEAVYEFGHGLFYTTFAESSSNTTTKEVKLNIQDILSRTHEELASITQLPVLNFTANIRNTGKLESDYTAMVFANTSDAGPAPYPKKWLVGWDRLGEVKVGETRELRVPVEVGSFARVNEDGDWVLFPGTFELALNLERKVRVKVVLEGEEEVVLKWPGKE.

Positions Met-1–Ala-26 are cleaved as a signal peptide. 5 N-linked (GlcNAc...) asparagine glycosylation sites follow: Asn-29, Asn-124, Asn-148, Asn-242, and Asn-251. Asp-315 is a catalytic residue. N-linked (GlcNAc...) asparagine glycosylation is found at Asn-357, Asn-390, Asn-413, Asn-444, Asn-455, Asn-573, Asn-665, Asn-696, and Asn-718.

It belongs to the glycosyl hydrolase 3 family.

It localises to the secreted. It carries out the reaction Hydrolysis of (1-&gt;4)-beta-D-xylans, to remove successive D-xylose residues from the non-reducing termini.. The protein operates within glycan degradation; xylan degradation. Xylan 1,4-beta-xylosidase involved in the hydrolysis of xylan, a major structural heterogeneous polysaccharide found in plant biomass representing the second most abundant polysaccharide in the biosphere, after cellulose. The chain is Exo-1,4-beta-xylosidase xlnD (xlnD) from Aspergillus awamori (Black koji mold).